The following is a 269-amino-acid chain: Monofunctional glycosyltransferase (269 aa).

Residues 46 to 66 form a helical membrane-spanning segment; the sequence is ILLTILIIIALFIGIMYFLST.

This sequence belongs to the glycosyltransferase 51 family.

It localises to the cell membrane. The catalysed reaction is [GlcNAc-(1-&gt;4)-Mur2Ac(oyl-L-Ala-gamma-D-Glu-L-Lys-D-Ala-D-Ala)](n)-di-trans,octa-cis-undecaprenyl diphosphate + beta-D-GlcNAc-(1-&gt;4)-Mur2Ac(oyl-L-Ala-gamma-D-Glu-L-Lys-D-Ala-D-Ala)-di-trans,octa-cis-undecaprenyl diphosphate = [GlcNAc-(1-&gt;4)-Mur2Ac(oyl-L-Ala-gamma-D-Glu-L-Lys-D-Ala-D-Ala)](n+1)-di-trans,octa-cis-undecaprenyl diphosphate + di-trans,octa-cis-undecaprenyl diphosphate + H(+). The protein operates within cell wall biogenesis; peptidoglycan biosynthesis. Functionally, peptidoglycan polymerase that catalyzes glycan chain elongation using lipid-linked disaccharide-pentapeptide as the substrate. This chain is Monofunctional glycosyltransferase, found in Staphylococcus aureus (strain JH1).